The sequence spans 117 residues: Ribonuclease P protein component (117 aa).

Belongs to the RnpA family. As to quaternary structure, consists of a catalytic RNA component (M1 or rnpB) and a protein subunit.

The enzyme catalyses Endonucleolytic cleavage of RNA, removing 5'-extranucleotides from tRNA precursor.. In terms of biological role, RNaseP catalyzes the removal of the 5'-leader sequence from pre-tRNA to produce the mature 5'-terminus. It can also cleave other RNA substrates such as 4.5S RNA. The protein component plays an auxiliary but essential role in vivo by binding to the 5'-leader sequence and broadening the substrate specificity of the ribozyme. In Nocardioides sp. (strain ATCC BAA-499 / JS614), this protein is Ribonuclease P protein component.